The chain runs to 395 residues: Chalcone synthase (395 aa).

Residue C164 is part of the active site.

Belongs to the thiolase-like superfamily. Chalcone/stilbene synthases family.

It carries out the reaction (E)-4-coumaroyl-CoA + 3 malonyl-CoA + 3 H(+) = 2',4,4',6'-tetrahydroxychalcone + 3 CO2 + 4 CoA. It participates in secondary metabolite biosynthesis; flavonoid biosynthesis. Its function is as follows. The primary product of this enzyme is 4,2',4',6'-tetrahydroxychalcone (also termed naringenin-chalcone or chalcone) which can under specific conditions spontaneously isomerize into naringenin. This is Chalcone synthase (CHS) from Betula pendula (European white birch).